The chain runs to 365 residues: Pre-mRNA-splicing factor srp2 (365 aa).

2 consecutive RRM domains span residues 6–69 (LFVG…RIVV) and 100–166 (LIVE…AVTL). Residues 166–365 (LREDPDAANE…SAEGQVAAEW (200 aa)) form a disordered region. Residues 184-194 (FRSRSPPARRR) show a composition bias toward basic residues. 7 positions are modified to phosphoserine: Ser186, Ser188, Ser276, Ser294, Ser296, Ser298, and Ser308. Positions 195–307 (YRDDYRRGGD…SPRRDREENR (113 aa)) are enriched in basic and acidic residues. Positions 316–332 (SYSAAPEASMESSAPTE) are enriched in low complexity. Residues 341–353 (EEQQPLQNHSDVG) are compositionally biased toward polar residues.

This sequence belongs to the splicing factor SR family. Extensively phosphorylated on serine residues in the RS domain.

The protein resides in the nucleus. Functionally, has a role in pre-mRNA splicing where it is involved in spliceosome assembly. This chain is Pre-mRNA-splicing factor srp2 (srp2), found in Schizosaccharomyces pombe (strain 972 / ATCC 24843) (Fission yeast).